A 264-amino-acid chain; its full sequence is Thymidylate synthase (264 aa).

Residue R21 coordinates dUMP. Residue H51 coordinates (6R)-5,10-methylene-5,6,7,8-tetrahydrofolate. DUMP is bound at residue 126 to 127; the sequence is RR. The Nucleophile role is filled by C146. Residues 166 to 169, N177, and 207 to 209 each bind dUMP; these read RSAD and HLY. D169 provides a ligand contact to (6R)-5,10-methylene-5,6,7,8-tetrahydrofolate. A263 serves as a coordination point for (6R)-5,10-methylene-5,6,7,8-tetrahydrofolate.

The protein belongs to the thymidylate synthase family. Bacterial-type ThyA subfamily. As to quaternary structure, homodimer.

The protein resides in the cytoplasm. It catalyses the reaction dUMP + (6R)-5,10-methylene-5,6,7,8-tetrahydrofolate = 7,8-dihydrofolate + dTMP. It functions in the pathway pyrimidine metabolism; dTTP biosynthesis. In terms of biological role, catalyzes the reductive methylation of 2'-deoxyuridine-5'-monophosphate (dUMP) to 2'-deoxythymidine-5'-monophosphate (dTMP) while utilizing 5,10-methylenetetrahydrofolate (mTHF) as the methyl donor and reductant in the reaction, yielding dihydrofolate (DHF) as a by-product. This enzymatic reaction provides an intracellular de novo source of dTMP, an essential precursor for DNA biosynthesis. The polypeptide is Thymidylate synthase (Alkalilimnicola ehrlichii (strain ATCC BAA-1101 / DSM 17681 / MLHE-1)).